The following is a 196-amino-acid chain: MTKLIVGLGNPGEEHTEDRHNAGFWFLDVLAKQLNSRFESEKRFHGKVAKAKWEGEDLFLLKPSTYMNLSGQSVGALCRFHKITPAEILVVQDELDLKPGTARLKLGGGTGGHNGLKDIQAHLSTPEYWRLRLGIGHPRDLAGDGRPMDVADYVLRRPQLAEQKMIDASIENGLQILPLFLKGDTQTAMMELHSKA.

Residue H15 coordinates tRNA. H20 serves as the catalytic Proton acceptor. The tRNA site is built by Y66, N68, and N114.

Belongs to the PTH family. As to quaternary structure, monomer.

It is found in the cytoplasm. The catalysed reaction is an N-acyl-L-alpha-aminoacyl-tRNA + H2O = an N-acyl-L-amino acid + a tRNA + H(+). In terms of biological role, hydrolyzes ribosome-free peptidyl-tRNAs (with 1 or more amino acids incorporated), which drop off the ribosome during protein synthesis, or as a result of ribosome stalling. Functionally, catalyzes the release of premature peptidyl moieties from peptidyl-tRNA molecules trapped in stalled 50S ribosomal subunits, and thus maintains levels of free tRNAs and 50S ribosomes. The protein is Peptidyl-tRNA hydrolase of Polynucleobacter asymbioticus (strain DSM 18221 / CIP 109841 / QLW-P1DMWA-1) (Polynucleobacter necessarius subsp. asymbioticus).